Reading from the N-terminus, the 215-residue chain is Vesicle-trafficking protein SEC22b-A (215 aa).

Residues 1–190 (MVLQTMIVRV…RSDAKYLNTR (190 aa)) lie on the Cytoplasmic side of the membrane. A Longin domain is found at 6–119 (MIVRVADSLP…YSFIEFDTYI (114 aa)). Residues 134–194 (NLGNINSELH…KYLNTRSTYA (61 aa)) enclose the v-SNARE coiled-coil homology domain. A helical transmembrane segment spans residues 191–213 (STYAKVAAGAVIIITLIIYVRFW). Residues 214–215 (WL) lie on the Lumenal side of the membrane.

Belongs to the synaptobrevin family. In terms of assembly, component of 2 distinct SNARE complexes.

The protein localises to the endoplasmic reticulum membrane. It localises to the endoplasmic reticulum-Golgi intermediate compartment membrane. Its subcellular location is the golgi apparatus. It is found in the cis-Golgi network membrane. The protein resides in the trans-Golgi network membrane. The protein localises to the melanosome. In terms of biological role, SNARE involved in targeting and fusion of ER-derived transport vesicles with the Golgi complex as well as Golgi-derived retrograde transport vesicles with the ER. The protein is Vesicle-trafficking protein SEC22b-A of Danio rerio (Zebrafish).